The chain runs to 363 residues: Fructose-bisphosphate aldolase 2 (363 aa).

D-glyceraldehyde 3-phosphate is bound at residue Ser61. Catalysis depends on Asp109, which acts as the Proton donor. Zn(2+)-binding residues include His110, Asp144, Glu174, and His226. Gly227 contacts dihydroxyacetone phosphate. His264 is a binding site for Zn(2+). 265 to 267 contributes to the dihydroxyacetone phosphate binding site; it reads GGS.

The protein belongs to the class II fructose-bisphosphate aldolase family. In terms of assembly, homodimer. Requires Zn(2+) as cofactor.

It carries out the reaction beta-D-fructose 1,6-bisphosphate = D-glyceraldehyde 3-phosphate + dihydroxyacetone phosphate. Its pathway is carbohydrate degradation; glycolysis; D-glyceraldehyde 3-phosphate and glycerone phosphate from D-glucose: step 4/4. Catalyzes the aldol condensation of dihydroxyacetone phosphate (DHAP or glycerone-phosphate) with glyceraldehyde 3-phosphate (G3P) to form fructose 1,6-bisphosphate (FBP) in gluconeogenesis and the reverse reaction in glycolysis. The sequence is that of Fructose-bisphosphate aldolase 2 (FBA2) from Paracoccidioides lutzii (strain ATCC MYA-826 / Pb01) (Paracoccidioides brasiliensis).